A 224-amino-acid polypeptide reads, in one-letter code: Ribose-5-phosphate isomerase A (224 aa).

Residues 26–29, 82–85, and 95–98 each bind substrate; these read TGST, DGAD, and KGGG. The active-site Proton acceptor is the Glu104. Residue Lys122 coordinates substrate.

The protein belongs to the ribose 5-phosphate isomerase family. As to quaternary structure, homodimer.

It carries out the reaction aldehydo-D-ribose 5-phosphate = D-ribulose 5-phosphate. The protein operates within carbohydrate degradation; pentose phosphate pathway; D-ribose 5-phosphate from D-ribulose 5-phosphate (non-oxidative stage): step 1/1. In terms of biological role, catalyzes the reversible conversion of ribose-5-phosphate to ribulose 5-phosphate. This is Ribose-5-phosphate isomerase A from Lactococcus lactis subsp. cremoris (strain MG1363).